The sequence spans 485 residues: Glutamate--tRNA ligase (485 aa).

A 'HIGH' region motif is present at residues 12-22 (PSPTGYMHIGN). Positions 253–257 (KLSKR) match the 'KMSKS' region motif. Residue Lys256 participates in ATP binding.

This sequence belongs to the class-I aminoacyl-tRNA synthetase family. Glutamate--tRNA ligase type 1 subfamily. In terms of assembly, monomer.

It is found in the cytoplasm. The enzyme catalyses tRNA(Glu) + L-glutamate + ATP = L-glutamyl-tRNA(Glu) + AMP + diphosphate. Functionally, catalyzes the attachment of glutamate to tRNA(Glu) in a two-step reaction: glutamate is first activated by ATP to form Glu-AMP and then transferred to the acceptor end of tRNA(Glu). This Clostridium acetobutylicum (strain ATCC 824 / DSM 792 / JCM 1419 / IAM 19013 / LMG 5710 / NBRC 13948 / NRRL B-527 / VKM B-1787 / 2291 / W) protein is Glutamate--tRNA ligase.